The primary structure comprises 334 residues: Putative violet-sensitive opsin (334 aa).

At 1–29 (MGKYFYLYENISKVGPYDGPQYYLAPTWA) the chain is on the extracellular side. N-linked (GlcNAc...) asparagine glycosylation occurs at N10. A helical transmembrane segment spans residues 30–54 (FYLQAAFMGFVFFVGTPLNFVVLLA). Topologically, residues 55 to 66 (TAKYKKLRVPLN) are cytoplasmic. Residues 67–88 (YILVNITFAGFIFVTFSVSQVF) traverse the membrane as a helical segment. Over 89-106 (LASVRGYYFFGQTLCALE) the chain is Extracellular. C103 and C179 are joined by a disulfide. A helical membrane pass occupies residues 107–126 (AAVGAVAGLVTSWSLAVLSF). The Cytoplasmic portion of the chain corresponds to 127-145 (ERYLVICKPFGAFKFGSNH). A helical transmembrane segment spans residues 146–168 (ALAAVIFTWFMGVVRCPPFFGWS). Residues 169–194 (RYIPEGLGCSCGPDWYTNCEEFSCAS) are Extracellular-facing. Residues 195 to 222 (YSKFLLVTCFICPITIIIFSYSQLLGAL) form a helical membrane-spanning segment. Over 223–244 (RAVAAQQAESASTQKAEKEVSR) the chain is Cytoplasmic. A helical membrane pass occupies residues 245–272 (MIIVMVASFVTCYGPYALTAQYYAYSQD). Residues 273–279 (ENKDYRL) are Extracellular-facing. Residues 280–301 (VTIPAFFSKSSCVYNPLIYAFM) form a helical membrane-spanning segment. An N6-(retinylidene)lysine modification is found at K288. At 302–334 (NKQFNGCIMEMVFGKKMEEASEVSSKTEVSTDS) the chain is on the cytoplasmic side.

The protein belongs to the G-protein coupled receptor 1 family. Opsin subfamily. Phosphorylated on some or all of the serine and threonine residues present in the C-terminal region. As to expression, the three color pigments are found in the cone photoreceptor cells.

The protein localises to the membrane. Visual pigments are the light-absorbing molecules that mediate vision. They consist of an apoprotein, opsin, covalently linked to cis-retinal. This is Putative violet-sensitive opsin from Oryzias latipes (Japanese rice fish).